The sequence spans 484 residues: Endoglucanase 9 (484 aa).

A signal peptide spans 1-21 (MTSLFFFVLLFSSLLISNGDA). The Nucleophile role is filled by Asp-77. Catalysis depends on residues His-402, Asp-453, and Glu-462.

The protein belongs to the glycosyl hydrolase 9 (cellulase E) family. In terms of tissue distribution, specifically expressed in root cap cells.

Its subcellular location is the secreted. The protein resides in the cell wall. It catalyses the reaction Endohydrolysis of (1-&gt;4)-beta-D-glucosidic linkages in cellulose, lichenin and cereal beta-D-glucans.. This chain is Endoglucanase 9 (CEL3), found in Arabidopsis thaliana (Mouse-ear cress).